Here is a 398-residue protein sequence, read N- to C-terminus: UPF0496 protein At5g66660 (398 aa).

Transmembrane regions (helical) follow at residues 240–260 (VFFA…TTMS) and 263–283 (PVVC…GKWF).

It belongs to the UPF0496 family.

The protein localises to the membrane. The polypeptide is UPF0496 protein At5g66660 (Arabidopsis thaliana (Mouse-ear cress)).